The primary structure comprises 181 residues: NADH-quinone oxidoreductase subunit I (181 aa).

4Fe-4S ferredoxin-type domains lie at 51-80 (TRNSNGSERCVACNLCSAVCPVNCISLKKS) and 90-119 (KSFQINLSRCIFCGLCEEACPTMAIQLTPD). Positions 60, 63, 66, 70, 99, 102, 105, and 109 each coordinate [4Fe-4S] cluster.

This sequence belongs to the complex I 23 kDa subunit family. As to quaternary structure, NDH-1 is composed of 13 different subunits. Subunits NuoA, H, J, K, L, M, N constitute the membrane sector of the complex. Requires [4Fe-4S] cluster as cofactor.

The protein localises to the cell membrane. It catalyses the reaction a quinone + NADH + 5 H(+)(in) = a quinol + NAD(+) + 4 H(+)(out). NDH-1 shuttles electrons from NADH, via FMN and iron-sulfur (Fe-S) centers, to quinones in the respiratory chain. The immediate electron acceptor for the enzyme in this species is believed to be ubiquinone. Couples the redox reaction to proton translocation (for every two electrons transferred, four hydrogen ions are translocated across the cytoplasmic membrane), and thus conserves the redox energy in a proton gradient. This Buchnera aphidicola subsp. Cinara cedri (strain Cc) protein is NADH-quinone oxidoreductase subunit I.